A 130-amino-acid polypeptide reads, in one-letter code: Large ribosomal subunit protein bL12 (130 aa).

This sequence belongs to the bacterial ribosomal protein bL12 family. Homodimer. Part of the ribosomal stalk of the 50S ribosomal subunit. Forms a multimeric L10(L12)X complex, where L10 forms an elongated spine to which 2 to 4 L12 dimers bind in a sequential fashion. Binds GTP-bound translation factors.

Functionally, forms part of the ribosomal stalk which helps the ribosome interact with GTP-bound translation factors. Is thus essential for accurate translation. The polypeptide is Large ribosomal subunit protein bL12 (Nostoc punctiforme (strain ATCC 29133 / PCC 73102)).